The primary structure comprises 360 residues: Peptide chain release factor 1 (360 aa).

The residue at position 235 (Gln-235) is an N5-methylglutamine. Over residues 283–293 the composition is skewed to basic and acidic residues; it reads EREAQAKEASA. Residues 283–305 are disordered; it reads EREAQAKEASARKSLIGSGDRSD.

Belongs to the prokaryotic/mitochondrial release factor family. In terms of processing, methylated by PrmC. Methylation increases the termination efficiency of RF1.

Its subcellular location is the cytoplasm. Peptide chain release factor 1 directs the termination of translation in response to the peptide chain termination codons UAG and UAA. This Ralstonia pickettii (strain 12J) protein is Peptide chain release factor 1.